Here is a 444-residue protein sequence, read N- to C-terminus: Cortexillin-1 (444 aa).

The segment at 1–227 (MAGKDWEIVQ…VLYTSLFFHA (227 aa)) is actin-binding. Calponin-homology (CH) domains lie at 8-115 (IVQE…RKYR) and 124-229 (KSSE…HAYR). 2 coiled-coil regions span residues 227–352 (AYRA…TRIR) and 410–434 (LATKLEAENLAIMKLLNQKEDDLKA).

The protein belongs to the cortexillin family. As to quaternary structure, homodimer; parallel.

It localises to the cytoplasm. It is found in the cytoskeleton. Functionally, actin-bundling protein. When linked to F-actin the actin filaments form preferentially anti-parallel bundles that associate into meshworks. Plays a major role in cytokinesis. Negatively regulates cortical localization of rapgap1. The protein is Cortexillin-1 (ctxA) of Dictyostelium discoideum (Social amoeba).